A 128-amino-acid polypeptide reads, in one-letter code: V-type proton ATPase subunit F (128 aa).

Belongs to the V-ATPase F subunit family. As to quaternary structure, V-ATPase is a heteromultimeric enzyme composed of a peripheral catalytic V1 complex (components A to H) attached to an integral membrane V0 proton pore complex (components: a, c, c'', d and e).

The protein localises to the vacuole membrane. Its function is as follows. Subunit of the peripheral V1 complex of vacuolar ATPase essential for assembly or catalytic function. V-ATPase is responsible for acidifying a variety of intracellular compartments in eukaryotic cells. The protein is V-type proton ATPase subunit F (VHA-F) of Arabidopsis thaliana (Mouse-ear cress).